Consider the following 149-residue polypeptide: Golgi apparatus membrane protein tvp-18 (149 aa).

An N-linked (GlcNAc...) asparagine glycan is attached at N11. 4 helical membrane passes run 18 to 38 (WLGI…IFTF), 41 to 61 (IIIV…FVEV), 84 to 103 (NYTR…LSCI), and 108 to 128 (SLLV…LAAL).

Belongs to the TVP18 family.

It localises to the golgi apparatus membrane. In terms of biological role, golgi membrane protein involved in vesicular trafficking. This is Golgi apparatus membrane protein tvp-18 (tvp-18) from Neurospora crassa (strain ATCC 24698 / 74-OR23-1A / CBS 708.71 / DSM 1257 / FGSC 987).